The following is a 447-amino-acid chain: Probable glycine dehydrogenase (decarboxylating) subunit 1 (447 aa).

This sequence belongs to the GcvP family. N-terminal subunit subfamily. The glycine cleavage system is composed of four proteins: P, T, L and H. In this organism, the P 'protein' is a heterodimer of two subunits.

It catalyses the reaction N(6)-[(R)-lipoyl]-L-lysyl-[glycine-cleavage complex H protein] + glycine + H(+) = N(6)-[(R)-S(8)-aminomethyldihydrolipoyl]-L-lysyl-[glycine-cleavage complex H protein] + CO2. The glycine cleavage system catalyzes the degradation of glycine. The P protein binds the alpha-amino group of glycine through its pyridoxal phosphate cofactor; CO(2) is released and the remaining methylamine moiety is then transferred to the lipoamide cofactor of the H protein. This Bacillus cereus (strain AH187) protein is Probable glycine dehydrogenase (decarboxylating) subunit 1.